Reading from the N-terminus, the 396-residue chain is Succinyl-diaminopimelate desuccinylase (396 aa).

Zn(2+) is bound at residue H74. D76 is an active-site residue. Residue D107 coordinates Zn(2+). E142 functions as the Proton acceptor in the catalytic mechanism. Residues E143, E171, and H360 each coordinate Zn(2+).

It belongs to the peptidase M20A family. DapE subfamily. As to quaternary structure, homodimer. The cofactor is Zn(2+). Co(2+) is required as a cofactor.

The enzyme catalyses N-succinyl-(2S,6S)-2,6-diaminopimelate + H2O = (2S,6S)-2,6-diaminopimelate + succinate. The protein operates within amino-acid biosynthesis; L-lysine biosynthesis via DAP pathway; LL-2,6-diaminopimelate from (S)-tetrahydrodipicolinate (succinylase route): step 3/3. In terms of biological role, catalyzes the hydrolysis of N-succinyl-L,L-diaminopimelic acid (SDAP), forming succinate and LL-2,6-diaminopimelate (DAP), an intermediate involved in the bacterial biosynthesis of lysine and meso-diaminopimelic acid, an essential component of bacterial cell walls. The chain is Succinyl-diaminopimelate desuccinylase from Methylobacterium sp. (strain 4-46).